The following is a 363-amino-acid chain: Protein RecA (363 aa).

66-73 (GPESSGKT) provides a ligand contact to ATP. The segment at 327–363 (YGIDEKSIADRENPEKIKEKREETSEENKTDNSEKTK) is disordered. The segment covering 329-363 (IDEKSIADRENPEKIKEKREETSEENKTDNSEKTK) has biased composition (basic and acidic residues).

The protein belongs to the RecA family.

It localises to the cytoplasm. Can catalyze the hydrolysis of ATP in the presence of single-stranded DNA, the ATP-dependent uptake of single-stranded DNA by duplex DNA, and the ATP-dependent hybridization of homologous single-stranded DNAs. It interacts with LexA causing its activation and leading to its autocatalytic cleavage. This is Protein RecA from Lactobacillus acidophilus (strain ATCC 700396 / NCK56 / N2 / NCFM).